We begin with the raw amino-acid sequence, 314 residues long: MSWIEKILNKSNITQTRKANIPEGVWTKCDSCSQVLYRAELERNLEVCPKCDHHMRISARTRLATFLDEGATTELGGELEPKDILKFRDSKKYKDRISAAQKQTQEKDALVVMKGTLSGMSVVAAAFEFAFMGGSMASVVGARFVRAVEQALADNCPLICFSSSGGARMQEALMSLMQMAKTSAALAKMQERGLPYISIMTDPTMGGVSASLAMLGDINIAEPKALIGFAGPRVIEQTVREKLPSGFQRSEFLLAKGAIDMIVRRPEMRDTLASLLSKLTHQSQPGTKPIVAEFVAEPADVEADIQISTNKEDA.

A CoA carboxyltransferase N-terminal domain is found at 25–294; the sequence is VWTKCDSCSQ…PGTKPIVAEF (270 aa). Positions 29, 32, 48, and 51 each coordinate Zn(2+). The segment at 29–51 adopts a C4-type zinc-finger fold; that stretch reads CDSCSQVLYRAELERNLEVCPKC.

This sequence belongs to the AccD/PCCB family. Acetyl-CoA carboxylase is a heterohexamer composed of biotin carboxyl carrier protein (AccB), biotin carboxylase (AccC) and two subunits each of ACCase subunit alpha (AccA) and ACCase subunit beta (AccD). Zn(2+) serves as cofactor.

Its subcellular location is the cytoplasm. The enzyme catalyses N(6)-carboxybiotinyl-L-lysyl-[protein] + acetyl-CoA = N(6)-biotinyl-L-lysyl-[protein] + malonyl-CoA. Its pathway is lipid metabolism; malonyl-CoA biosynthesis; malonyl-CoA from acetyl-CoA: step 1/1. In terms of biological role, component of the acetyl coenzyme A carboxylase (ACC) complex. Biotin carboxylase (BC) catalyzes the carboxylation of biotin on its carrier protein (BCCP) and then the CO(2) group is transferred by the transcarboxylase to acetyl-CoA to form malonyl-CoA. The polypeptide is Acetyl-coenzyme A carboxylase carboxyl transferase subunit beta (Photorhabdus laumondii subsp. laumondii (strain DSM 15139 / CIP 105565 / TT01) (Photorhabdus luminescens subsp. laumondii)).